Here is a 133-residue protein sequence, read N- to C-terminus: MSQLVYFSSSSENTQRFIERLGLPAVRIPLNERERIQVDEPYILIVPSYGGGGTAGAVPRQVIRFLNDEHNRVLLRGVIASGNRNFGEAYGRAGDVIARKCGVPWLYRFELMGTQSDIENVRKGVTEFWQRQP.

Belongs to the NrdI family.

Its function is as follows. Probably involved in ribonucleotide reductase function. The chain is Protein NrdI from Escherichia coli O17:K52:H18 (strain UMN026 / ExPEC).